A 294-amino-acid polypeptide reads, in one-letter code: Ribosomal RNA small subunit methyltransferase A (294 aa).

Asn29, Val31, Gly56, Glu77, Asp107, and Asn126 together coordinate S-adenosyl-L-methionine.

The protein belongs to the class I-like SAM-binding methyltransferase superfamily. rRNA adenine N(6)-methyltransferase family. RsmA subfamily.

It is found in the cytoplasm. It carries out the reaction adenosine(1518)/adenosine(1519) in 16S rRNA + 4 S-adenosyl-L-methionine = N(6)-dimethyladenosine(1518)/N(6)-dimethyladenosine(1519) in 16S rRNA + 4 S-adenosyl-L-homocysteine + 4 H(+). In terms of biological role, specifically dimethylates two adjacent adenosines (A1518 and A1519) in the loop of a conserved hairpin near the 3'-end of 16S rRNA in the 30S particle. May play a critical role in biogenesis of 30S subunits. This is Ribosomal RNA small subunit methyltransferase A from Mycobacterium sp. (strain JLS).